The following is a 572-amino-acid chain: Arginine--tRNA ligase (572 aa).

A 'HIGH' region motif is present at residues 122 to 132 (PNLAKEMHVGH).

Belongs to the class-I aminoacyl-tRNA synthetase family. As to quaternary structure, monomer.

The protein localises to the cytoplasm. It catalyses the reaction tRNA(Arg) + L-arginine + ATP = L-arginyl-tRNA(Arg) + AMP + diphosphate. The sequence is that of Arginine--tRNA ligase from Neisseria gonorrhoeae (strain NCCP11945).